A 509-amino-acid chain; its full sequence is Lanosterol 14-alpha demethylase (509 aa).

A helical transmembrane segment spans residues Gly30–Phe50. Residue Cys455 coordinates heme.

It belongs to the cytochrome P450 family. The cofactor is heme. Post-translationally, ubiquitinated by MARCHF6, leading to proteasomal degradation.

The protein resides in the endoplasmic reticulum membrane. It is found in the microsome membrane. It carries out the reaction a 14alpha-methyl steroid + 3 reduced [NADPH--hemoprotein reductase] + 3 O2 = a Delta(14) steroid + formate + 3 oxidized [NADPH--hemoprotein reductase] + 4 H2O + 4 H(+). The catalysed reaction is lanosterol + 3 reduced [NADPH--hemoprotein reductase] + 3 O2 = 4,4-dimethyl-5alpha-cholesta-8,14,24-trien-3beta-ol + formate + 3 oxidized [NADPH--hemoprotein reductase] + 4 H2O + 4 H(+). It catalyses the reaction 24,25-dihydrolanosterol + 3 reduced [NADPH--hemoprotein reductase] + 3 O2 = 4,4-dimethyl-8,14-cholestadien-3beta-ol + formate + 3 oxidized [NADPH--hemoprotein reductase] + 4 H2O + 4 H(+). The enzyme catalyses a 14alpha-methyl steroid + reduced [NADPH--hemoprotein reductase] + O2 = a 14alpha-hydroxymethyl steroid + oxidized [NADPH--hemoprotein reductase] + H2O + H(+). It carries out the reaction a 14alpha-hydroxymethyl steroid + reduced [NADPH--hemoprotein reductase] + O2 = a 14alpha-formyl steroid + oxidized [NADPH--hemoprotein reductase] + 2 H2O + H(+). The catalysed reaction is a 14alpha-formyl steroid + reduced [NADPH--hemoprotein reductase] + O2 = a Delta(14) steroid + formate + oxidized [NADPH--hemoprotein reductase] + H2O + 2 H(+). It catalyses the reaction lanosterol + reduced [NADPH--hemoprotein reductase] + O2 = 32-hydroxylanosterol + oxidized [NADPH--hemoprotein reductase] + H2O + H(+). The enzyme catalyses 32-hydroxylanosterol + reduced [NADPH--hemoprotein reductase] + O2 = 32-oxolanosterol + oxidized [NADPH--hemoprotein reductase] + 2 H2O + H(+). It carries out the reaction 32-oxolanosterol + reduced [NADPH--hemoprotein reductase] + O2 = 4,4-dimethyl-5alpha-cholesta-8,14,24-trien-3beta-ol + formate + oxidized [NADPH--hemoprotein reductase] + H2O + 2 H(+). The catalysed reaction is 24,25-dihydrolanosterol + reduced [NADPH--hemoprotein reductase] + O2 = 32-hydroxy-24,25-dihydrolanosterol + oxidized [NADPH--hemoprotein reductase] + H2O + H(+). It catalyses the reaction 32-hydroxy-24,25-dihydrolanosterol + reduced [NADPH--hemoprotein reductase] + O2 = 32-oxo-24,25-dihydrolanosterol + oxidized [NADPH--hemoprotein reductase] + 2 H2O + H(+). The enzyme catalyses 32-oxo-24,25-dihydrolanosterol + reduced [NADPH--hemoprotein reductase] + O2 = 4,4-dimethyl-8,14-cholestadien-3beta-ol + formate + oxidized [NADPH--hemoprotein reductase] + H2O + 2 H(+). It functions in the pathway steroid biosynthesis; zymosterol biosynthesis; zymosterol from lanosterol: step 1/6. Inhibited by azalanstat. Inhibited by azole antifungal agents ketoconazole, itraconazole and fluconazole. Functionally, sterol 14alpha-demethylase that plays a critical role in the cholesterol biosynthesis pathway, being cholesterol the major sterol component in mammalian membranes as well as a precursor for bile acid and steroid hormone synthesis. Cytochrome P450 monooxygenase that catalyzes the three-step oxidative removal of the 14alpha-methyl group (C-32) of sterols such as lanosterol (lanosta-8,24-dien-3beta-ol) and 24,25-dihydrolanosterol (DHL) in the form of formate, and converts the sterols to 4,4-dimethyl-5alpha-cholesta-8,14,24-trien-3beta-ol and 4,4-dimethyl-8,14-cholestadien-3beta-ol, respectively, which are intermediates of cholesterol biosynthesis. Can also demethylate substrates not intrinsic to mammals, such as eburicol (24-methylene-24,25-dihydrolanosterol), but at a lower rate than DHL. This is Lanosterol 14-alpha demethylase from Macaca fascicularis (Crab-eating macaque).